A 310-amino-acid polypeptide reads, in one-letter code: MEFKHISVLLDECIEGLNIKENGIYVDCTLGGAGHSSEILKNLSKEGKLIGIDQDEEALKAASEKLKEYENVLYKHSNFYHIKDILEELEVGKVDGILMDLGVSSYQLDEKSRGFSYMQNAPLDMRMNKKSSLDAYEVVNFYDESKLARIIKDYGEERFAKRISNFIVESRENKKIETTGELVDIIKRAIPAKFRREGPHPAKRTFQAIRIEVNGELEILNKAIEDSVKSLKSGGRIAIITFHSLEDRIVKNKFKELEDPCICPKDFPICTCGKEPLVKIITRKPIDPSKEEVEINPRSRSAKLRIAEKL.

Residues alanine 33–histidine 35, aspartate 53, phenylalanine 79, aspartate 100, and glutamine 107 contribute to the S-adenosyl-L-methionine site.

Belongs to the methyltransferase superfamily. RsmH family.

The protein localises to the cytoplasm. It carries out the reaction cytidine(1402) in 16S rRNA + S-adenosyl-L-methionine = N(4)-methylcytidine(1402) in 16S rRNA + S-adenosyl-L-homocysteine + H(+). Functionally, specifically methylates the N4 position of cytidine in position 1402 (C1402) of 16S rRNA. This is Ribosomal RNA small subunit methyltransferase H from Clostridium tetani (strain Massachusetts / E88).